We begin with the raw amino-acid sequence, 92 residues long: MRCVTSFVVFCILMFFVLNIFTVEVKAQRLVPLCKTIGYENPGKCPADGNKFCRRKLDDRYVKYKRCDCQDTKGRKQNHHRCICYMKLPCNQ.

Positions 1–27 are cleaved as a signal peptide; the sequence is MRCVTSFVVFCILMFFVLNIFTVEVKA. 4 disulfides stabilise this stretch: Cys34–Cys90, Cys45–Cys69, Cys53–Cys82, and Cys67–Cys84.

Belongs to the DEFL family.

The protein localises to the secreted. The sequence is that of Putative defensin-like protein 251 (SCRL12) from Arabidopsis thaliana (Mouse-ear cress).